Reading from the N-terminus, the 326-residue chain is Zona pellucida-binding protein 2 (326 aa).

A signal peptide spans 1–20; it reads MLAWALLSAVLWSLAGVGSA. N-linked (GlcNAc...) asparagine glycans are attached at residues Asn86, Asn220, and Asn256.

It belongs to the zona pellucida-binding protein Sp38 family. In terms of processing, N-glycosylated.

The protein localises to the secreted. It localises to the cytoplasmic vesicle. It is found in the secretory vesicle. Its subcellular location is the acrosome. Its function is as follows. Is implicated in sperm-oocyte interaction during fertilization. The protein is Zona pellucida-binding protein 2 (Zpbp2) of Rattus norvegicus (Rat).